Here is a 280-residue protein sequence, read N- to C-terminus: tRNA (guanine-N(1)-)-methyltransferase (280 aa).

The disordered stretch occupies residues 71-94; that stretch reads DDVSSGTASTQDLQSALPHLSKPR. Over residues 74–84 the composition is skewed to polar residues; that stretch reads SSGTASTQDLQ. Residues G146 and 170–175 each bind S-adenosyl-L-methionine; that span reads IGDYVL.

The protein belongs to the RNA methyltransferase TrmD family. As to quaternary structure, homodimer.

The protein localises to the cytoplasm. The catalysed reaction is guanosine(37) in tRNA + S-adenosyl-L-methionine = N(1)-methylguanosine(37) in tRNA + S-adenosyl-L-homocysteine + H(+). Specifically methylates guanosine-37 in various tRNAs. The polypeptide is tRNA (guanine-N(1)-)-methyltransferase (Corynebacterium aurimucosum (strain ATCC 700975 / DSM 44827 / CIP 107346 / CN-1) (Corynebacterium nigricans)).